Here is a 220-residue protein sequence, read N- to C-terminus: Ribosomal RNA large subunit methyltransferase E (220 aa).

The S-adenosyl-L-methionine site is built by G60, W62, D92, D108, and D133. Catalysis depends on K173, which acts as the Proton acceptor.

Belongs to the class I-like SAM-binding methyltransferase superfamily. RNA methyltransferase RlmE family.

The protein resides in the cytoplasm. It carries out the reaction uridine(2552) in 23S rRNA + S-adenosyl-L-methionine = 2'-O-methyluridine(2552) in 23S rRNA + S-adenosyl-L-homocysteine + H(+). In terms of biological role, specifically methylates the uridine in position 2552 of 23S rRNA at the 2'-O position of the ribose in the fully assembled 50S ribosomal subunit. The sequence is that of Ribosomal RNA large subunit methyltransferase E from Paraburkholderia phymatum (strain DSM 17167 / CIP 108236 / LMG 21445 / STM815) (Burkholderia phymatum).